The chain runs to 465 residues: Phytase A (465 aa).

An N-terminal signal peptide occupies residues 1–26 (MVTLTFLLSAAYLLSGRVSAAPSSAG). The cysteines at positions 30 and 39 are disulfide-linked. 1D-myo-inositol hexakisphosphate contacts are provided by glutamine 49, tyrosine 50, arginine 80, histidine 81, arginine 84, and threonine 87. 4 disulfides stabilise this stretch: cysteine 70-cysteine 412, cysteine 213-cysteine 463, cysteine 262-cysteine 280, and cysteine 434-cysteine 442. Residue histidine 81 is the Nucleophile of the active site. An N-linked (GlcNAc...) asparagine glycan is attached at asparagine 104. 1D-myo-inositol hexakisphosphate is bound at residue arginine 164. A glycan (N-linked (GlcNAc...) asparagine) is linked at asparagine 205. 1D-myo-inositol hexakisphosphate is bound at residue aspartate 209. The N-linked (GlcNAc...) asparagine glycan is linked to asparagine 228. Lysine 299 provides a ligand contact to 1D-myo-inositol hexakisphosphate. 2 N-linked (GlcNAc...) asparagine glycosylation sites follow: asparagine 337 and asparagine 350. 2 residues coordinate 1D-myo-inositol hexakisphosphate: histidine 359 and aspartate 360. A glycan (N-linked (GlcNAc...) asparagine) is linked at asparagine 374.

Belongs to the histidine acid phosphatase family. Monomer.

It is found in the secreted. It carries out the reaction 1D-myo-inositol hexakisphosphate + H2O = 1D-myo-inositol 1,2,4,5,6-pentakisphosphate + phosphate. It catalyses the reaction 1D-myo-inositol 1,2,4,5,6-pentakisphosphate + H2O = 1D-myo-inositol 1,2,5,6-tetrakisphosphate + phosphate. The enzyme catalyses 1D-myo-inositol 1,2,5,6-tetrakisphosphate + H2O = 1D-myo-inositol 1,2,6-trisphosphate + phosphate. The catalysed reaction is 1D-myo-inositol 1,2,6-trisphosphate + H2O = 1D-myo-inositol 1,2-bisphosphate + phosphate. It carries out the reaction 1D-myo-inositol 1,2-bisphosphate + H2O = 1D-myo-inositol 2-phosphate + phosphate. Its function is as follows. Catalyzes the phosphate monoester hydrolysis of phytic acid (myo-inositol hexakisphosphate), which results in the stepwise formation of myo-inositol pentakis-, tetrakis-, tris-, bis-, and monophosphates, as well as the liberation of inorganic phosphate. Myo-inositol 2-monophosphate is the end product. Has a broad substrate specificity and is also able to dephosphorylate other classic acid phosphatase substrates such as p-nitrophenyl phosphate, phenyl phosphate, fructose 1,6-bisphosphate, fructose 6-phosphate, glucose 6-phosphate, ribose 5-phosphate, alpha-glycerophosphate, beta-glycerophosphate, 3-phosphoglycerate, phosphoenolpyruvate, as well as ADP and ATP. This chain is Phytase A (phyA), found in Aspergillus fumigatus (strain ATCC MYA-4609 / CBS 101355 / FGSC A1100 / Af293) (Neosartorya fumigata).